The primary structure comprises 1390 residues: DNA-directed RNA polymerase subunit beta (1390 aa).

This sequence belongs to the RNA polymerase beta chain family. The RNAP catalytic core consists of 2 alpha, 1 beta, 1 beta' and 1 omega subunit. When a sigma factor is associated with the core the holoenzyme is formed, which can initiate transcription.

It carries out the reaction RNA(n) + a ribonucleoside 5'-triphosphate = RNA(n+1) + diphosphate. Its function is as follows. DNA-dependent RNA polymerase catalyzes the transcription of DNA into RNA using the four ribonucleoside triphosphates as substrates. This is DNA-directed RNA polymerase subunit beta from Methylobacillus flagellatus (strain ATCC 51484 / DSM 6875 / VKM B-1610 / KT).